Consider the following 272-residue polypeptide: MKRIALLGCGSMGTQIALAIDSENFPATLTHVYDESKDASFSLTQKLKNKPEIVENSHLLSSQPIDIVVEAASQNAVKDVALSVIQNKKDLMIMSVGALLDESIYDILSDACNDFKKTIYLPSGAIAGLDGLKSVKDELESISITTTKHPRSLKGAKFFETSDINLDEITSSTVVYKGTAKEAVTLFPANINVAALLSLTGIGSEKTSVTIVADPNTDKNTHHIEASGKFGTMTFTIENVPDSNNPKTSRLAILSAIETLKKYCSDDIQIGT.

The NAD(+) site is built by alanine 125 and asparagine 192. Histidine 222 is a catalytic residue.

The protein belongs to the L-aspartate dehydrogenase family.

It catalyses the reaction L-aspartate + NADP(+) + H2O = oxaloacetate + NH4(+) + NADPH + H(+). The catalysed reaction is L-aspartate + NAD(+) + H2O = oxaloacetate + NH4(+) + NADH + H(+). The protein operates within cofactor biosynthesis; NAD(+) biosynthesis; iminoaspartate from L-aspartate (dehydrogenase route): step 1/1. Functionally, specifically catalyzes the NAD or NADP-dependent dehydrogenation of L-aspartate to iminoaspartate. This chain is L-aspartate dehydrogenase, found in Nitrosopumilus maritimus (strain SCM1).